Here is a 41-residue protein sequence, read N- to C-terminus: Disintegrin obtustatin (41 aa).

Disulfide bonds link cysteine 1-cysteine 10, cysteine 6-cysteine 29, cysteine 7-cysteine 34, and cysteine 19-cysteine 36. The Disintegrin domain maps to 1-41 (CTTGPCCRQCKLKPAGTTCWKTSLTSHYCTGKSCDCPLYPG). The short motif at 21-23 (KTS) is the Cell attachment site; atypical (KTS) element.

The protein belongs to the disintegrin family. Short disintegrin subfamily. In terms of assembly, monomer. As to expression, expressed by the venom gland.

The protein resides in the secreted. Is a potent and selective inhibitor of alpha-1/beta-1 (ITGA1/ITGB1) integrin. It blocks the adhesion of alpha-1/beta-1-expressing K562 cells to immobilized collagens IV and I with IC(50) of 2 and 0.5 nM, respectively. Potently inhibits angiogenesis in chicken and in mouse model and reduces tumor development by half. Is 25-fold less potent than viperistatin. The chain is Disintegrin obtustatin from Macrovipera lebetina obtusa (Levant blunt-nosed viper).